Consider the following 395-residue polypeptide: MVMGDTPSLDEIRKAQRADGPAGILAIGTANPANYVIQAEYPDYYFRITNSEHMTDLKEKFKRMCDKSTIRKRHMHVTEEFLKENPNMCAYMAPSLDARQDIVVVEVPKLGKEAAVKAIKEWGQPKSKITHLVFCTTSGVDMPGADYQLTKLLGLRPSVKRLMMYQQGCFAGGTVLRLAKDLAENNRGARVLVVCSEITAVTFRGPSDTHLDSLVGQALFSDGAAALIVGSDPDTSVGEKPIFEMVSAAQTILPDSDGAIDGHLREVGLTFHLLKDVPGLISKNIEKSLDEAFKPLGISDWNSLFWIAHPGGPAILDQVEIKLGLKEEKMRATRHVMREYGNMSSACVLFILDEMRKKSAKDGVATTGEGLEWGVLFGFGPGLTVETVVLHSVPL.

Valine 2 is modified (N-acetylvaline). Cysteine 169 is a catalytic residue.

The protein belongs to the thiolase-like superfamily. Chalcone/stilbene synthases family.

The catalysed reaction is (E)-4-coumaroyl-CoA + 3 malonyl-CoA + 3 H(+) = 2',4,4',6'-tetrahydroxychalcone + 3 CO2 + 4 CoA. Its pathway is secondary metabolite biosynthesis; flavonoid biosynthesis. The primary product of this enzyme is 4,2',4',6'-tetrahydroxychalcone (also termed naringenin-chalcone or chalcone) which can under specific conditions spontaneously isomerize into naringenin. The sequence is that of Chalcone synthase (CHS) from Cardamine amara (Large bitter-cress).